We begin with the raw amino-acid sequence, 485 residues long: MNESVTVRGKDRYKSGVMEYKKMGYWEPDYEPKDTDVIALFRVTPQDGVDPIEASAAVAGESSTATWTVVWTDRLTAAEKYRAKCYRVDPVPNSPGQYFAYIAYDLDLFENGSIANLSASIIGNVFGFKPLKALRLEDMRLPVAYVKTFQGPATGIVVERERMDKFGRPLLGATVKPKLGLSGRNYGRVVYEALKGGLDFTKDDENINSQPFMHWRERFLYCMEAVNKAQAASGEIKGTYLNVTAGTMEDMYERAEFAKQLGSVIIMIDLVIGYTAIQSMAKWARKNDMILHLHRAGHSTYTRQRNHGVSFRVIAKWMRLAGVDHIHAGTVVGKLEGDPATTRGYYDICREDHNPMALEHGVFFEQNWASLNKLMPVASGGIHAGQMHQLLDHLGEDVVLQFGGGTIGHPMGIQAGATANRVALEAMILARNEGRDYLHEGPEILAKAAQTCTPLKAALETWKNVTFNYESTDMPDYAPTPSVSV.

The substrate site is built by asparagine 124 and threonine 174. The active-site Proton acceptor is the lysine 176. Lysine 178 serves as a coordination point for substrate. Mg(2+) is bound by residues lysine 202, aspartate 204, and glutamate 205. Lysine 202 bears the N6-carboxylysine mark. The active-site Proton acceptor is histidine 294. Residues arginine 295, histidine 327, and serine 379 each coordinate substrate.

The protein belongs to the RuBisCO large chain family. Type I subfamily. In terms of assembly, heterohexadecamer of 8 large chains and 8 small chains. It depends on Mg(2+) as a cofactor.

It catalyses the reaction 2 (2R)-3-phosphoglycerate + 2 H(+) = D-ribulose 1,5-bisphosphate + CO2 + H2O. It carries out the reaction D-ribulose 1,5-bisphosphate + O2 = 2-phosphoglycolate + (2R)-3-phosphoglycerate + 2 H(+). In terms of biological role, ruBisCO catalyzes two reactions: the carboxylation of D-ribulose 1,5-bisphosphate, the primary event in carbon dioxide fixation, as well as the oxidative fragmentation of the pentose substrate. Both reactions occur simultaneously and in competition at the same active site. This chain is Ribulose bisphosphate carboxylase large chain, found in Rhodopseudomonas palustris (strain BisA53).